A 521-amino-acid polypeptide reads, in one-letter code: Signal recognition particle protein (521 aa).

GTP-binding positions include 107 to 114 (GLQGSGKT), 196 to 200 (DTAGR), and 254 to 257 (TKLD). The disordered stretch occupies residues 436–505 (GGMGIPGMGR…MPDGLNELPP (70 aa)). Basic residues predominate over residues 447 to 462 (SATRKSKGGKGKKRAR).

This sequence belongs to the GTP-binding SRP family. SRP54 subfamily. Part of the signal recognition particle protein translocation system, which is composed of SRP and FtsY.

It is found in the cytoplasm. It catalyses the reaction GTP + H2O = GDP + phosphate + H(+). Its function is as follows. Involved in targeting and insertion of nascent membrane proteins into the cytoplasmic membrane. Binds to the hydrophobic signal sequence of the ribosome-nascent chain (RNC) as it emerges from the ribosomes. The SRP-RNC complex is then targeted to the cytoplasmic membrane where it interacts with the SRP receptor FtsY. In Mycobacterium leprae (strain TN), this protein is Signal recognition particle protein.